The following is a 249-amino-acid chain: Aspartate/glutamate leucyltransferase (249 aa).

It belongs to the R-transferase family. Bpt subfamily.

Its subcellular location is the cytoplasm. The enzyme catalyses N-terminal L-glutamyl-[protein] + L-leucyl-tRNA(Leu) = N-terminal L-leucyl-L-glutamyl-[protein] + tRNA(Leu) + H(+). It carries out the reaction N-terminal L-aspartyl-[protein] + L-leucyl-tRNA(Leu) = N-terminal L-leucyl-L-aspartyl-[protein] + tRNA(Leu) + H(+). In terms of biological role, functions in the N-end rule pathway of protein degradation where it conjugates Leu from its aminoacyl-tRNA to the N-termini of proteins containing an N-terminal aspartate or glutamate. The protein is Aspartate/glutamate leucyltransferase of Brucella canis (strain ATCC 23365 / NCTC 10854 / RM-666).